Reading from the N-terminus, the 1220-residue chain is DNA-directed RNA polymerase subunit beta (1220 aa).

This sequence belongs to the RNA polymerase beta chain family. As to quaternary structure, the RNAP catalytic core consists of 2 alpha, 1 beta, 1 beta' and 1 omega subunit. When a sigma factor is associated with the core the holoenzyme is formed, which can initiate transcription.

It catalyses the reaction RNA(n) + a ribonucleoside 5'-triphosphate = RNA(n+1) + diphosphate. Functionally, DNA-dependent RNA polymerase catalyzes the transcription of DNA into RNA using the four ribonucleoside triphosphates as substrates. In Mesomycoplasma hyopneumoniae (strain J / ATCC 25934 / NCTC 10110) (Mycoplasma hyopneumoniae), this protein is DNA-directed RNA polymerase subunit beta.